The sequence spans 122 residues: Large ribosomal subunit protein uL14 (122 aa).

It belongs to the universal ribosomal protein uL14 family. In terms of assembly, part of the 50S ribosomal subunit. Forms a cluster with proteins L3 and L19. In the 70S ribosome, L14 and L19 interact and together make contacts with the 16S rRNA in bridges B5 and B8.

In terms of biological role, binds to 23S rRNA. Forms part of two intersubunit bridges in the 70S ribosome. The chain is Large ribosomal subunit protein uL14 from Caldanaerobacter subterraneus subsp. tengcongensis (strain DSM 15242 / JCM 11007 / NBRC 100824 / MB4) (Thermoanaerobacter tengcongensis).